The following is a 212-amino-acid chain: Large ribosomal subunit protein uL1 (212 aa).

It belongs to the universal ribosomal protein uL1 family. In terms of assembly, part of the 50S ribosomal subunit.

In terms of biological role, binds directly to 23S rRNA. Probably involved in E site tRNA release. Functionally, protein L1 is also a translational repressor protein, it controls the translation of its operon by binding to its mRNA. This chain is Large ribosomal subunit protein uL1, found in Natronomonas pharaonis (strain ATCC 35678 / DSM 2160 / CIP 103997 / JCM 8858 / NBRC 14720 / NCIMB 2260 / Gabara) (Halobacterium pharaonis).